A 189-amino-acid chain; its full sequence is MVKVIASSVRKGNVLDVDGKLYVVLTAQNFHPGKGTPVTQVDMRRIVDGVKVSERWRTTEQVERAFVEDVSFQYLYEDGEGFHFMNPGNYDQVVVDVETMGDQKAYLQEGMSCILSIHEGIPLALELPRHVTLEITETEPVVKGQTASSSYKPAMLSNGVRTMVPPHINAGTRVVIATEDNSYVERAKD.

It belongs to the elongation factor P family.

It is found in the cytoplasm. It participates in protein biosynthesis; polypeptide chain elongation. Involved in peptide bond synthesis. Stimulates efficient translation and peptide-bond synthesis on native or reconstituted 70S ribosomes in vitro. Probably functions indirectly by altering the affinity of the ribosome for aminoacyl-tRNA, thus increasing their reactivity as acceptors for peptidyl transferase. In Rhizobium leguminosarum bv. trifolii (strain WSM2304), this protein is Elongation factor P.